The following is a 426-amino-acid chain: Protein sum2 (426 aa).

A Sm domain is found at 1–80; sequence MTEFIGSRIS…VKDLRIEEPA (80 aa). 3 disordered regions span residues 79 to 100, 204 to 305, and 348 to 426; these read PATTPSAPPVQPPNDPAIIGSN, GMPS…AKPR, and SCES…ANDQ. Residues 84–93 are compositionally biased toward pro residues; that stretch reads SAPPVQPPND. A compositionally biased stretch (polar residues) spans 226-237; that stretch reads VSASPSLQSMPP. Low complexity predominate over residues 261 to 278; the sequence is RNSTVTNDRVVNTTVDVS. Polar residues predominate over residues 279–298; that stretch reads QSQTVETSGPSKEVPTTQPD. The 37-residue stretch at 296–332 folds into the DFDF domain; it reads QPDASAAKPRTEFDFQTANQKFQSMKDDLLKGKNDEE. Residues 335–351 carry the FFD box motif; it reads EFYKPKQSFFDNISCES. Residues 350-371 show a composition bias toward basic and acidic residues; it reads ESKEKGMEAADRRALRDRERSL. The TFG box signature appears at 360-380; it reads DRRALRDRERSLNMETFGVAG. Residues 384–401 show a composition bias toward basic residues; that stretch reads RGRRGRGRGRGGRGRGRG. The segment covering 405-426 has biased composition (polar residues); it reads NQYNQYRNSNGSQPRAQPANDQ.

In terms of biological role, required for G2/M phase checkpoint control. The chain is Protein sum2 (sum2) from Schizosaccharomyces pombe (strain 972 / ATCC 24843) (Fission yeast).